The following is a 350-amino-acid chain: Small ribosomal subunit biogenesis GTPase RsgA (350 aa).

Residues 1 to 17 (MSKNKLSKGQQRRVNAN) are compositionally biased toward polar residues. Residues 1–24 (MSKNKLSKGQQRRVNANHQRRLKT) are disordered. In terms of domain architecture, CP-type G spans 104 to 273 (TSVLTRPDFY…VIDSPGVREF (170 aa)). Residues 160–163 (NKID) and 214–222 (GQSGVGKSS) each bind GTP. The Zn(2+) site is built by Cys297, Cys302, His304, and Cys310.

It belongs to the TRAFAC class YlqF/YawG GTPase family. RsgA subfamily. In terms of assembly, monomer. Associates with 30S ribosomal subunit, binds 16S rRNA. Zn(2+) is required as a cofactor.

It is found in the cytoplasm. One of several proteins that assist in the late maturation steps of the functional core of the 30S ribosomal subunit. Helps release RbfA from mature subunits. May play a role in the assembly of ribosomal proteins into the subunit. Circularly permuted GTPase that catalyzes slow GTP hydrolysis, GTPase activity is stimulated by the 30S ribosomal subunit. The sequence is that of Small ribosomal subunit biogenesis GTPase RsgA from Salmonella schwarzengrund (strain CVM19633).